Here is a 454-residue protein sequence, read N- to C-terminus: tRNA modification GTPase MnmE (454 aa).

Residues Arg26, Glu84, and Lys123 each coordinate (6S)-5-formyl-5,6,7,8-tetrahydrofolate. Residues 219–378 (GLQVVIAGKP…LVDAITAHAG (160 aa)) form the TrmE-type G domain. Position 229 (Asn229) interacts with K(+). GTP is bound by residues 229–234 (NAGKSS), 248–254 (TDIAGTT), and 273–276 (DTAG). Ser233 provides a ligand contact to Mg(2+). K(+) contacts are provided by Thr248, Ile250, and Thr253. Thr254 contributes to the Mg(2+) binding site. (6S)-5-formyl-5,6,7,8-tetrahydrofolate is bound at residue Lys454.

The protein belongs to the TRAFAC class TrmE-Era-EngA-EngB-Septin-like GTPase superfamily. TrmE GTPase family. As to quaternary structure, homodimer. Heterotetramer of two MnmE and two MnmG subunits. Requires K(+) as cofactor.

The protein localises to the cytoplasm. Functionally, exhibits a very high intrinsic GTPase hydrolysis rate. Involved in the addition of a carboxymethylaminomethyl (cmnm) group at the wobble position (U34) of certain tRNAs, forming tRNA-cmnm(5)s(2)U34. This chain is tRNA modification GTPase MnmE, found in Acinetobacter baumannii (strain ATCC 17978 / DSM 105126 / CIP 53.77 / LMG 1025 / NCDC KC755 / 5377).